Here is a 335-residue protein sequence, read N- to C-terminus: 3-dehydroquinate synthase (335 aa).

Residues 56–61, 90–94, 114–115, Lys127, Lys135, and 153–156 each bind NAD(+); these read DGEKYK, GVITD, TT, and FLKT. Zn(2+) contacts are provided by Glu168, His227, and His243.

This sequence belongs to the sugar phosphate cyclases superfamily. Dehydroquinate synthase family. NAD(+) serves as cofactor. Co(2+) is required as a cofactor. The cofactor is Zn(2+).

It is found in the cytoplasm. It carries out the reaction 7-phospho-2-dehydro-3-deoxy-D-arabino-heptonate = 3-dehydroquinate + phosphate. It participates in metabolic intermediate biosynthesis; chorismate biosynthesis; chorismate from D-erythrose 4-phosphate and phosphoenolpyruvate: step 2/7. In terms of biological role, catalyzes the conversion of 3-deoxy-D-arabino-heptulosonate 7-phosphate (DAHP) to dehydroquinate (DHQ). In Pyrococcus furiosus (strain ATCC 43587 / DSM 3638 / JCM 8422 / Vc1), this protein is 3-dehydroquinate synthase.